Reading from the N-terminus, the 960-residue chain is Dynamin-like GTPase OPA1, mitochondrial (960 aa).

The transit peptide at 1-87 (MWRAGRAAVA…IKYGYQPRRN (87 aa)) directs the protein to the mitochondrion. Residues 88–96 (FWPARLAAR) are Mitochondrial matrix-facing. A helical membrane pass occupies residues 97 to 113 (LLKLRYIILGSAVGGGY). Residues 114-770 (TAKKTFDEWK…NAIENMIGPD (657 aa)) lie on the Mitochondrial intermembrane side of the membrane. Residues 210-254 (SDKEKIDQLQEELLHTQLKYQRILERLEKENKELRKLVLQKDDKG) are a coiled coil. The short motif at 217-222 (QLQEEL) is the LQQQIQ motif element. K228 carries the N6-acetyllysine modification. The region spanning 285–561 (QDHLPRVVVV…FWKMVRESVE (277 aa)) is the Dynamin-type G domain. Residues 295 to 302 (GDQSAGKT) form a G1 motif region. S298, G300, K301, T302, S303, and G317 together coordinate GTP. T302 contributes to the Mg(2+) binding site. Residues 321 to 324 (MMTR) are G2 motif. The Mg(2+) site is built by T323 and D398. Residues 398–401 (DLPG) are G3 motif. A G4 motif region spans residues 467–470 (TKVD). Positions 468, 470, and 503 each coordinate GTP. Residues 501–504 (VVTG) form a G5 motif region. 2 stalk region regions span residues 589–836 (DRNE…IKDT) and 874–928 (CNDV…VKLL). Residues 736-856 (SDKQQWDAAI…KTALNHCNLC (121 aa)) are paddle region. The stretch at 771–781 (WKKRWMYWKNR) is an intramembrane region. Residues 782-960 (TQEQCVHNET…AFIEALHQEK (179 aa)) are Mitochondrial intermembrane-facing. The cysteines at positions 856 and 874 are disulfide-linked. Residues 895–960 (RQQLTNTEVR…AFIEALHQEK (66 aa)) adopt a coiled-coil conformation.

It belongs to the TRAFAC class dynamin-like GTPase superfamily. Dynamin/Fzo/YdjA family. As to quaternary structure, oligomeric complex consisting of membrane-bound and soluble forms of OPA1. Interacts with RCC1L; RCC1L acts as a guanine nucleotide exchange factor (GEF) for OPA1 by exchanging bound GDP for free GTP. Interacts with CHCHD3 and IMMT; these interactions occur preferentially with soluble OPA1 forms. Interacts with PRELID1. In terms of processing, cleaved by OMA1 or YME1L downstream of the transmembrane region in response to different signals to generate soluble forms. Cleaved by OMA1 at position S1 following stress conditions, generating the short soluble form (Dynamin-like GTPase OPA1, short form; S-OPA1). AFG3L2 is involved in the regulation of OMA1-dependent processing of OPA1. PARL-dependent proteolytic processing releases an antiapoptotic soluble form not required for mitochondrial fusion. Cleavage at position S2 by YME1L is required to mediate oxidative phosphorylation (OXPHOS)-induced mitochondrial fusion. Cleavage occurs in the sequence motif Leu-Gln-Gln-Gln-Ile-Gln (LQQQIQ). Post-translationally, cleavage at position S3 by YME1L is required for membrane tubulation. Detected in brain (at protein level). Detected in brain, brain stem, heart, kidney, liver and skeletal muscle.

It localises to the mitochondrion inner membrane. The protein resides in the mitochondrion intermembrane space. It carries out the reaction GTP + H2O = GDP + phosphate + H(+). Activated by guanine nucleotide exchange factor RCC1L. Its function is as follows. Dynamin-related GTPase that is essential for normal mitochondrial morphology by mediating fusion of the mitochondrial inner membranes, regulating cristae morphology and maintaining respiratory chain function. Exists in two forms: the transmembrane, long form (Dynamin-like GTPase OPA1, long form; L-OPA1), which is tethered to the inner mitochondrial membrane, and the short soluble form (Dynamin-like GTPase OPA1, short form; S-OPA1), which results from proteolytic cleavage and localizes in the intermembrane space. Both forms (L-OPA1 and S-OPA1) cooperate to catalyze the fusion of the mitochondrial inner membrane. The equilibrium between L-OPA1 and S-OPA1 is essential: excess levels of S-OPA1, produced by cleavage by OMA1 following loss of mitochondrial membrane potential, lead to an impaired equilibrium between L-OPA1 and S-OPA1, inhibiting mitochondrial fusion. The balance between L-OPA1 and S-OPA1 also influences cristae shape and morphology. Involved in remodeling cristae and the release of cytochrome c during apoptosis. Proteolytic processing by PARL in response to intrinsic apoptotic signals may lead to disassembly of OPA1 oligomers and release of the caspase activator cytochrome C (CYCS) into the mitochondrial intermembrane space. Acts as a regulator of T-helper Th17 cells, which are characterized by cells with fused mitochondria with tight cristae, by mediating mitochondrial membrane remodeling: OPA1 is required for interleukin-17 (IL-17) production. Its role in mitochondrial morphology is required for mitochondrial genome maintenance. Functionally, constitutes the transmembrane long form (L-OPA1) that plays a central role in mitochondrial inner membrane fusion and cristae morphology. L-OPA1 and the soluble short form (S-OPA1) form higher-order helical assemblies that coordinate the fusion of mitochondrial inner membranes. Inner membrane-anchored L-OPA1 molecules initiate membrane remodeling by recruiting soluble S-OPA1 to rapidly polymerize into a flexible cylindrical scaffold encaging the mitochondrial inner membrane. Once at the membrane surface, the formation of S-OPA1 helices induce bilayer curvature. OPA1 dimerization through the paddle region, which inserts into cardiolipin-containing membrane, promotes GTP hydrolysis and the helical assembly of a flexible OPA1 lattice on the membrane, which drives membrane curvature and mitochondrial fusion. Plays a role in the maintenance and remodeling of mitochondrial cristae, some invaginations of the mitochondrial inner membrane that provide an increase in the surface area. Probably acts by forming helical filaments at the inside of inner membrane tubes with the shape and dimensions of crista junctions. The equilibrium between L-OPA1 and S-OPA1 influences cristae shape and morphology: increased L-OPA1 levels promote cristae stacking and elongated mitochondria, while increased S-OPA1 levels correlated with irregular cristae packing and round mitochondria shape. In terms of biological role, constitutes the soluble short form (S-OPA1) generated by cleavage by OMA1, which plays a central role in mitochondrial inner membrane fusion and cristae morphology. The transmembrane long form (L-OPA1) and the S-OPA1 form higher-order helical assemblies that coordinate the fusion of mitochondrial inner membranes. Inner membrane-anchored L-OPA1 molecules initiate membrane remodeling by recruiting soluble S-OPA1 to rapidly polymerize into a flexible cylindrical scaffold encaging the mitochondrial inner membrane. Once at the membrane surface, the formation of S-OPA1 helices induce bilayer curvature. OPA1 dimerization through the paddle region, which inserts into cardiolipin-containing membrane, promotes GTP hydrolysis and the helical assembly of a flexible OPA1 lattice on the membrane, which drives membrane curvature and mitochondrial fusion. Excess levels of S-OPA1 produced by cleavage by OMA1 following stress conditions that induce loss of mitochondrial membrane potential, lead to an impaired equilibrium between L-OPA1 and S-OPA1, thereby inhibiting mitochondrial fusion. Involved in mitochondrial safeguard in response to transient mitochondrial membrane depolarization by mediating flickering: cleavage by OMA1 leads to excess production of S-OPA1, preventing mitochondrial hyperfusion. Plays a role in the maintenance and remodeling of mitochondrial cristae, some invaginations of the mitochondrial inner membrane that provide an increase in the surface area. Probably acts by forming helical filaments at the inside of inner membrane tubes with the shape and dimensions of crista junctions. The equilibrium between L-OPA1 and S-OPA1 influences cristae shape and morphology: increased L-OPA1 levels promote cristae stacking and elongated mitochondria, while increased S-OPA1 levels correlated with irregular cristae packing and round mitochondria shape. Isoforms that contain the alternative exon 4b are required for mitochondrial genome maintenance, possibly by anchoring the mitochondrial nucleoids to the inner mitochondrial membrane. The chain is Dynamin-like GTPase OPA1, mitochondrial from Mus musculus (Mouse).